Reading from the N-terminus, the 1121-residue chain is Cuscuta receptor 1 (1121 aa).

An N-terminal signal peptide occupies residues 1-20; it reads MGNIKFLLLVFFLIVVVVNG. At 21–1058 the chain is on the extracellular side; that stretch reads CWEEERNALL…EESSELEDIQ (1038 aa). Asparagine 91 carries an N-linked (GlcNAc...) asparagine glycan. 8 LRR repeats span residues 98–122, 126–152, 185–209, 210–233, 234–259, 260–282, 284–308, and 309–331; these read FKSLQVLLLSSQNIIGWTKNEGFSK, LPNLKEVDLQYNPIDPKVLLSSLCWIS, LSNLRELWFEGYEINDINILSALGE, LRNLEKLILDDNNFNSTIFSSLKI, FPSLKHLNLAANEINGNVEMNDIIDL, SNLEYLDLSDNNIHSFATTKGNK, MTSLRSLLLGSSYSNSSRVIRSLKS, and FSSLKSLSYKNSNLTSPSIIYAL. A glycan (N-linked (GlcNAc...) asparagine) is linked at asparagine 224. Residues asparagine 298, asparagine 321, and asparagine 333 are each glycosylated (N-linked (GlcNAc...) asparagine). One copy of the LRR 9 repeat lies at 334 to 360; it reads LSTVEYLYFKGSSLNDNFLPNIGQMTS. 2 N-linked (GlcNAc...) asparagine glycosylation sites follow: asparagine 372 and asparagine 406. 21 LRR repeats span residues 383-406, 407-432, 433-457, 459-479, 507-531, 556-580, 581-605, 607-628, 630-654, 655-678, 680-701, 702-725, 726-749, 751-772, 773-796, 797-820, 822-846, 914-938, 939-961, 962-986, and 988-1012; these read LKYIEELDFLNNNFVGTLPLCLGN, LTSLRWLSLAGNNLHGNIASHSIWRR, LTSLEYLDIADNQFDVPLSFSQFSD, KKLIYLNVGYNTIITDTEYQN, QYDLRILAIEGNQLQGKFPTWLLEN, HLHLEAVDVSNNKLNGHIPQNMSLA, FPKLLSLNMSHNHLEGPIPSKISGI, LTILDLSVNFLSGEVPGDLAVV, SPQLFYLRLSNNKLKGKIFSEEFRP, HVLSFLYLNDNNFEGALPSNVFLS, LITLDASRNNFSGEIPGCTRDN, RRLLQLDLSKNHLQGLIPVEICNL, KIINVLAISENKISGSIPSCVSSL, LKHIHLQKNQLGGELGHVIFNF, SSLITLDLRYNNFAGNIPYTIGSL, SNLNYLLLSNNKLEGDIPTQICML, NLSIVDLSFNKLYGPLPPCLGYLTQ, LKYMSGIDLSSNRLTGEIPVELGNM, SNIHALNLSHNHLNGRIPNTFSN, LQEIESLDLSCNRLNGSIPVGLLEL, and SLAVFSVAYNNLSGAVPDFKAQFGT. Asparagine 531, asparagine 576, and asparagine 588 each carry an N-linked (GlcNAc...) asparagine glycan. N-linked (GlcNAc...) asparagine glycosylation is present at asparagine 689. Residue asparagine 771 is glycosylated (N-linked (GlcNAc...) asparagine). Residues asparagine 822, asparagine 937, asparagine 945, asparagine 976, asparagine 998, asparagine 1014, and asparagine 1041 are each glycosylated (N-linked (GlcNAc...) asparagine). Residues 1059–1079 traverse the membrane as a helical segment; that stretch reads CFYIGFVVSFGAILLGLAAAL. Topologically, residues 1080–1121 are cytoplasmic; the sequence is CLNRHWRRAWFRMIEALMFYCYYFVLDNIVTPIKSRWYKNVG.

Belongs to the RLP family. Interacts with an 11 kDa glycine-rich protein (GRP) of C.reflexa. Interacts with SOBIR1 and SOBIR1-like kinases; presence or absence of GRP has no effect on interaction.

Its subcellular location is the cell membrane. The protein resides in the cell surface. In terms of biological role, involved in plant defense. Contributes to resistance against parasitic plant C.reflexa. Acts as a receptor for the 11 kDa glycine-rich protein (GRP) of C.reflexa inducing immune responses such as emission of stress-related phytohormone ethylene, reactive oxygen species (ROS) release, and hypersensitive cell death. Recognizes a specific pathogen-associated molecular pattern (PAMP), a cysteine-rich peptide 21 (crip21), from GRP located on the cell wall of C.reflexa. In Solanum lycopersicum (Tomato), this protein is Cuscuta receptor 1.